The following is a 280-amino-acid chain: Chaperone protein LppX (280 aa).

A signal peptide spans 1 to 18 (MRKWLIFLLIAAVAGLSA). A lipid anchor (N-palmitoyl cysteine) is attached at Cys19. Cys19 is lipidated: S-diacylglycerol cysteine.

Its subcellular location is the cell membrane. Its function is as follows. Is required for the expression of the adjacently encoded xylanase Xyn11E in an active form. LppX seems to act as a specific chaperone necessary for the correct folding of the xylanase during secretion across the cytoplasmic membrane. The protein is Chaperone protein LppX of Paenibacillus barcinonensis.